Reading from the N-terminus, the 134-residue chain is Small ribosomal subunit protein uS12 (134 aa).

The segment at 1–30 (MPTINQLVKHGREKVKEKSKSPALQGHPQK) is disordered. The residue at position 89 (D89) is a 3-methylthioaspartic acid. Residues 106 to 134 (GVENRRQSRSKYGAKRPKAGAAAGAKGKK) form a disordered region. Over residues 112-123 (QSRSKYGAKRPK) the composition is skewed to basic residues. Residues 124 to 134 (AGAAAGAKGKK) show a composition bias toward low complexity.

This sequence belongs to the universal ribosomal protein uS12 family. Part of the 30S ribosomal subunit. Contacts proteins S8 and S17. May interact with IF1 in the 30S initiation complex.

In terms of biological role, with S4 and S5 plays an important role in translational accuracy. Functionally, interacts with and stabilizes bases of the 16S rRNA that are involved in tRNA selection in the A site and with the mRNA backbone. Located at the interface of the 30S and 50S subunits, it traverses the body of the 30S subunit contacting proteins on the other side and probably holding the rRNA structure together. The combined cluster of proteins S8, S12 and S17 appears to hold together the shoulder and platform of the 30S subunit. This is Small ribosomal subunit protein uS12 from Fervidobacterium nodosum (strain ATCC 35602 / DSM 5306 / Rt17-B1).